A 527-amino-acid chain; its full sequence is Tyrosine-protein kinase TXK (527 aa).

Positions 35-79 (DEELPEKYTQRRRPWLSQLSNKKQSNTGRVQPSKRKPLPPLPPSE) are disordered. Residues 51-64 (SQLSNKKQSNTGRV) show a composition bias toward polar residues. Residues 68-73 (KRKPLP) carry the Nuclear localization signal motif. In terms of domain architecture, SH3 spans 82–142 (EEKIQVKALY…PSNYVTENKI (61 aa)). A Phosphotyrosine; by autocatalysis modification is found at tyrosine 91. Residues 150–246 (WYHRNITRNQ…GLMTRLRYPV (97 aa)) form the SH2 domain. One can recognise a Protein kinase domain in the interval 271 to 527 (LAFIKEIGSG…RAVTEIAETW (257 aa)). ATP is bound by residues 277 to 285 (IGSGQFGVV) and lysine 299. Aspartate 390 (proton acceptor) is an active-site residue. Tyrosine 420 is subject to Phosphotyrosine; by FYN and autocatalysis.

The protein belongs to the protein kinase superfamily. Tyr protein kinase family. TEC subfamily. As to quaternary structure, interacts with PARP1 and EEF1A1. Interacts with SH2D2A. Interacts with FYN. Phosphorylated at Tyr-420 by FYN. Autophosphorylation at Tyr-91 is critical for the activation of TXK, leading to the up-regulation of IFN-gamma gene transcription. In terms of processing, the cysteine string at the N-terminus is palmitoylated and required for the proper subcellular location. Expressed in T-cells and some myeloid cell lines. Expressed in Th1/Th0 cells with IFN-gamma-producing potential.

It localises to the cytoplasm. The protein resides in the nucleus. Its subcellular location is the cell membrane. The enzyme catalyses L-tyrosyl-[protein] + ATP = O-phospho-L-tyrosyl-[protein] + ADP + H(+). Its activity is regulated as follows. Activated by phosphorylation by FYN. In terms of biological role, non-receptor tyrosine kinase that plays a redundant role with ITK in regulation of the adaptive immune response. Regulates the development, function and differentiation of conventional T-cells and nonconventional NKT-cells. When antigen presenting cells (APC) activate T-cell receptor (TCR), a series of phosphorylation leads to the recruitment of TXK to the cell membrane, where it is phosphorylated at Tyr-420. Phosphorylation leads to TXK full activation. Also contributes to signaling from many receptors and participates in multiple downstream pathways, including regulation of the actin cytoskeleton. Like ITK, can phosphorylate PLCG1, leading to its localization in lipid rafts and activation, followed by subsequent cleavage of its substrates. In turn, the endoplasmic reticulum releases calcium in the cytoplasm and the nuclear activator of activated T-cells (NFAT) translocates into the nucleus to perform its transcriptional duty. Plays a role in the positive regulation of IFNG transcription in T-helper 1 cells as part of an IFNG promoter-binding complex with PARP1 and EEF1A1. Within the complex, phosphorylates both PARP1 and EEF1A1. Also phosphorylates key sites in LCP2 leading to the up-regulation of Th1 preferred cytokine IL-2. Phosphorylates 'Tyr-201' of CTLA4 which leads to the association of PI-3 kinase with the CTLA4 receptor. The chain is Tyrosine-protein kinase TXK (TXK) from Homo sapiens (Human).